Here is a 280-residue protein sequence, read N- to C-terminus: NAD(P)H-quinone oxidoreductase subunit K, chloroplastic (280 aa).

Residues C65, C66, C130, and C161 each contribute to the [4Fe-4S] cluster site. Residues 257-280 (LLKDWKQSNQKQEQNVKMMKEEEA) are disordered.

Belongs to the complex I 20 kDa subunit family. As to quaternary structure, NDH is composed of at least 16 different subunits, 5 of which are encoded in the nucleus. It depends on [4Fe-4S] cluster as a cofactor.

The protein resides in the plastid. It is found in the chloroplast thylakoid membrane. It catalyses the reaction a plastoquinone + NADH + (n+1) H(+)(in) = a plastoquinol + NAD(+) + n H(+)(out). The enzyme catalyses a plastoquinone + NADPH + (n+1) H(+)(in) = a plastoquinol + NADP(+) + n H(+)(out). Functionally, NDH shuttles electrons from NAD(P)H:plastoquinone, via FMN and iron-sulfur (Fe-S) centers, to quinones in the photosynthetic chain and possibly in a chloroplast respiratory chain. The immediate electron acceptor for the enzyme in this species is believed to be plastoquinone. Couples the redox reaction to proton translocation, and thus conserves the redox energy in a proton gradient. The protein is NAD(P)H-quinone oxidoreductase subunit K, chloroplastic of Staurastrum punctulatum (Green alga).